The following is a 376-amino-acid chain: N-acetyldiaminopimelate deacetylase (376 aa).

D69 is an active-site residue. E128 acts as the Proton acceptor in catalysis.

It belongs to the peptidase M20A family. N-acetyldiaminopimelate deacetylase subfamily.

The catalysed reaction is N-acetyl-(2S,6S)-2,6-diaminopimelate + H2O = (2S,6S)-2,6-diaminopimelate + acetate. Its pathway is amino-acid biosynthesis; L-lysine biosynthesis via DAP pathway; LL-2,6-diaminopimelate from (S)-tetrahydrodipicolinate (acetylase route): step 3/3. Its function is as follows. Catalyzes the conversion of N-acetyl-diaminopimelate to diaminopimelate and acetate. The chain is N-acetyldiaminopimelate deacetylase from Bacillus cytotoxicus (strain DSM 22905 / CIP 110041 / 391-98 / NVH 391-98).